A 270-amino-acid polypeptide reads, in one-letter code: Probable thioesterase BOA10 (270 aa).

Belongs to the AMT4 thioesterase family.

It functions in the pathway polyketide biosynthesis. Probable thioesterase; part of the gene cluster B that mediates the biosynthesis of botcinic acid and its botcinin derivatives, acetate-derived polyketides that contribute to virulence when combined with the sesquiterpene botrydial. Botcinic acid and its derivatives have been shown to induce chlorosis and necrosis during host plant infection, but also have antifungal activities. Two polyketide synthases, BOA6 and BOA9, are involved in the biosynthesis of botcinins. BOA6 mediates the formation of the per-methylated tetraketide core by condensation of four units of malonyl-CoA with one unit of acetyl-CoA, which would be methylated in activated methylene groups to yield a bicyclic acid intermediate that could then either be converted to botrylactone derivatives or lose the starter acetate unit through a retro-Claisen type C-C bond cleavage to yield botcinin derivatives. The second polyketide synthase, BOA9, is probably required for the biosynthesis of the tetraketide side chain of botcinins. The methyltransferase (MT) domain within BOA6 is probably responsible for the incorporation of four methyl groups. The trans-enoyl reductase BOA5 might take over the enoyl reductase function of BOA6 that misses an ER domain. The monooxygenases BOA2, BOA3 and BOA4 might be involved in further hydroxylations at C4, C5 and C8, whereas BOA7, close to BOA9, could potentially be involved in the hydroxylation at C4 in the side chain of botcinins. This Botryotinia fuckeliana (strain B05.10) (Noble rot fungus) protein is Probable thioesterase BOA10.